The primary structure comprises 452 residues: UDP-N-acetylmuramate--L-alanine ligase (452 aa).

Residue 121 to 127 (GTHGKTT) coordinates ATP.

The protein belongs to the MurCDEF family.

It localises to the cytoplasm. It carries out the reaction UDP-N-acetyl-alpha-D-muramate + L-alanine + ATP = UDP-N-acetyl-alpha-D-muramoyl-L-alanine + ADP + phosphate + H(+). The protein operates within cell wall biogenesis; peptidoglycan biosynthesis. Its function is as follows. Cell wall formation. The polypeptide is UDP-N-acetylmuramate--L-alanine ligase (Christiangramia forsetii (strain DSM 17595 / CGMCC 1.15422 / KT0803) (Gramella forsetii)).